Reading from the N-terminus, the 607-residue chain is Rap1 GTPase-GDP dissociation stimulator 1 (607 aa).

ARM repeat units follow at residues 89–131 (GLIS…DQAG) and 170–211 (DSLQ…NLAE). The segment at 122 to 170 (EGRSAVDQAGGAQIVIDHLRSLCGRTDPASEKLMTVFCGMLMNYSNEND) is prevents binding to prenylated RHOA. Lys-230 is modified (N6-acetyllysine). ARM repeat units lie at residues 347–390 (DGNC…NLAI), 391–431 (PVVN…MLID), and 479–519 (SKDV…LIAA).

Interacts with RABL3. Interacts with RHOT1. As to quaternary structure, interacts with unprenylated RHOA; the interaction is direct. Interacts with RAP1A. Interacts with KRAS. Interacts with RAC1. Interacts with RAP1B. Preferentially interacts with unprenylated GTPases that will become geranylgeranylated. May also interact with prenylated GTPases. In terms of assembly, interacts with prenylated RHOA; the interaction is direct and in a 1:1 stoichiometry. Interacts with RAP1A. Interacts with KRAS. Interacts with RAC1. Interacts with RAP1B. Preferentially interacts with prenylated GTPases. Post-translationally, serotonylated on Gln residues by TGM2 in response to hypoxia, leading to its inactivation.

The protein resides in the cytoplasm. The protein localises to the cytosol. It localises to the endoplasmic reticulum. Its subcellular location is the mitochondrion. It is found in the nucleus. Its function is as follows. Acts as a GEF (guanine nucleotide exchange factor) for the Rho family of small GTP-binding proteins (G proteins) that stimulates the dissociation of GDP to enable subsequent binding of GTP. Additionally, appears to chaperone the processing and/or trafficking of small GTPases containing a C-terminal polybasic region independently of GEF activity. Targets include RAP1A/RAP1B, RHOA, RHOB, RHOC, RAC1 and KRAS. Regulates mitochondrial dynamics by controlling RHOT function to promote mitochondrial fission during high calcium conditions. Able to promote the Ca(2+) release from the endoplasmic reticulum via both inositol trisphosphate (Ins3P) and ryanodine sensitive receptors leading to a enhanced mitochondrial Ca(2+) uptake. Functionally, acts as a GEF (guanine nucleotide exchange factor) for unprenylated RHOA. Chaperones the entry and passage of small GTPases through the prenylation pathway. Recognizes the last amino acid in the GTPase C-terminal CAAX motif with a preference for 'Leu' over 'Met', indicating involvement in the geranylgeranylation pathway. May also recognize prenylated GTPases. Acts as a GEF (guanine nucleotide exchange factor) for prenylated RHOA. Acts as a GEF for RHOC. Chaperones the downstream trafficking and/or processing of small newly prenylated GTPases. Escorts RAC1 to the nucleus. The protein is Rap1 GTPase-GDP dissociation stimulator 1 of Mus musculus (Mouse).